The sequence spans 329 residues: Glycerol-3-phosphate dehydrogenase [NAD(P)+] (329 aa).

3 residues coordinate NADPH: Trp15, His35, and Lys107. Sn-glycerol 3-phosphate is bound by residues Lys107, Gly135, and Ser137. Ala139 lines the NADPH pocket. Residues Lys190, Asp243, Ser253, Arg254, and Asn255 each contribute to the sn-glycerol 3-phosphate site. The Proton acceptor role is filled by Lys190. Position 254 (Arg254) interacts with NADPH. Positions 276 and 278 each coordinate NADPH.

Belongs to the NAD-dependent glycerol-3-phosphate dehydrogenase family.

The protein localises to the cytoplasm. It carries out the reaction sn-glycerol 3-phosphate + NAD(+) = dihydroxyacetone phosphate + NADH + H(+). It catalyses the reaction sn-glycerol 3-phosphate + NADP(+) = dihydroxyacetone phosphate + NADPH + H(+). Its pathway is membrane lipid metabolism; glycerophospholipid metabolism. Catalyzes the reduction of the glycolytic intermediate dihydroxyacetone phosphate (DHAP) to sn-glycerol 3-phosphate (G3P), the key precursor for phospholipid synthesis. The polypeptide is Glycerol-3-phosphate dehydrogenase [NAD(P)+] (Rhodopseudomonas palustris (strain TIE-1)).